Reading from the N-terminus, the 125-residue chain is Translation initiation factor 5A (125 aa).

K35 carries the hypusine modification.

The protein belongs to the eIF-5A family.

It localises to the cytoplasm. Its function is as follows. Functions by promoting the formation of the first peptide bond. This Methanosphaerula palustris (strain ATCC BAA-1556 / DSM 19958 / E1-9c) protein is Translation initiation factor 5A (eIF5A).